The chain runs to 826 residues: E3 ubiquitin-protein ligase SH3RF1 (826 aa).

An RING-type zinc finger spans residues 12–53; the sequence is CPVCLERLDASAKVLPCQHTFCKRCLLGIVSSRKELRCPECR. Residues 80 to 130 are disordered; sequence PRKAGDGGSAGNSTNALRAQGSVTTNGGLNDAQNTQSGQQRIQARSPPVRG. The span at 90–122 shows a compositional bias: polar residues; it reads GNSTNALRAQGSVTTNGGLNDAQNTQSGQQRIQ. 2 consecutive SH3 domains span residues 132–191 and 194–257; these read PQLP…IIKP and QPPP…FNSA. The disordered stretch occupies residues 266-319; that stretch reads KPSGADTGEGSSGTSHSGNSQKQADAKKNTKKRHSFTSLTMSNKSSQSVQNRHS. Positions 273–285 are enriched in low complexity; it reads GEGSSGTSHSGNS. A compositionally biased stretch (polar residues) spans 301–317; it reads FTSLTMSNKSSQSVQNR. Residues 398 to 459 enclose the SH3 3 domain; that stretch reads ARPSVFIAIY…PGNYVAPVTR (62 aa). Disordered stretches follow at residues 647–694 and 725–759; these read NSAA…QTNS and DSVS…CSSL. The segment covering 652–663 has biased composition (basic and acidic residues); that stretch reads KQDKDSKKEKKG. Residues 767-826 form the SH3 4 domain; sequence RPCERYRVMVSYPPQSEAELELKEGDIVFVHKKREDGWFKGTLQRNGKTGLFPGSFVENI.

Belongs to the SH3RF family. Autoubiquitinated. Ubiquitinated by SH3RF2, leading to proteasome-mediated degradation.

Its subcellular location is the cytoplasm. The protein resides in the perinuclear region. It localises to the cell projection. The protein localises to the lamellipodium. It is found in the golgi apparatus. Its subcellular location is the trans-Golgi network. The enzyme catalyses S-ubiquitinyl-[E2 ubiquitin-conjugating enzyme]-L-cysteine + [acceptor protein]-L-lysine = [E2 ubiquitin-conjugating enzyme]-L-cysteine + N(6)-ubiquitinyl-[acceptor protein]-L-lysine.. It functions in the pathway protein modification; protein ubiquitination. Functionally, has E3 ubiquitin-protein ligase activity. In the absence of an external substrate, it can catalyze self-ubiquitination. Acts as a scaffold protein that contributes to the effective activation of the JNK signaling pathway. Plays an essential role in the anterior neural development. The protein is E3 ubiquitin-protein ligase SH3RF1 (sh3rf1) of Xenopus laevis (African clawed frog).